Reading from the N-terminus, the 367-residue chain is DNA replication and repair protein RecF (367 aa).

30-37 contributes to the ATP binding site; that stretch reads GNNAQGKT.

It belongs to the RecF family.

It localises to the cytoplasm. In terms of biological role, the RecF protein is involved in DNA metabolism; it is required for DNA replication and normal SOS inducibility. RecF binds preferentially to single-stranded, linear DNA. It also seems to bind ATP. The polypeptide is DNA replication and repair protein RecF (Clostridium tetani (strain Massachusetts / E88)).